A 345-amino-acid chain; its full sequence is Biotin synthase (345 aa).

In terms of domain architecture, Radical SAM core spans asparagine 60–arginine 287. Positions 75, 79, and 82 each coordinate [4Fe-4S] cluster. The [2Fe-2S] cluster site is built by cysteine 119, cysteine 150, cysteine 210, and arginine 282.

This sequence belongs to the radical SAM superfamily. Biotin synthase family. In terms of assembly, homodimer. The cofactor is [4Fe-4S] cluster. It depends on [2Fe-2S] cluster as a cofactor.

It catalyses the reaction (4R,5S)-dethiobiotin + (sulfur carrier)-SH + 2 reduced [2Fe-2S]-[ferredoxin] + 2 S-adenosyl-L-methionine = (sulfur carrier)-H + biotin + 2 5'-deoxyadenosine + 2 L-methionine + 2 oxidized [2Fe-2S]-[ferredoxin]. It functions in the pathway cofactor biosynthesis; biotin biosynthesis; biotin from 7,8-diaminononanoate: step 2/2. Catalyzes the conversion of dethiobiotin (DTB) to biotin by the insertion of a sulfur atom into dethiobiotin via a radical-based mechanism. This Polaromonas naphthalenivorans (strain CJ2) protein is Biotin synthase.